The sequence spans 404 residues: MKLPIYLDYSATTPVDPRVAEKMMQFLTMDGTFGNPASRSHRFGWQAEEAVDIARNQIAELVGADPREIVFTSGATESDNLAIKGAANFYQKKGKHIITSKTEHKAVLDTCRQLEREGFEVTYLAPQRNGIIDLKELEAAMRDDTILVSIMHVNNEIGVVQDIATIGEMCRARGIIYHVDATQSVGKLPIDLSQLKVDLMSFSGHKIYGPKGIGALYVRRKPRIRIEAQMHGGGHERGMRSGTLPVHQIVGMGEAYRIAKEEMESEMARLRGLRDRLWNGVKDMEEVYLNGDLEQGAPNILNVSFNYVEGESLIMALKDLAVSSGSACTSASLEPSYVLRALGMTDELAHSSIRFSLGRFTTEEEIDYTINLVRNSIGRLRDLSPLWEMFKQGVDLNSIEWSHH.

Pyridoxal 5'-phosphate is bound by residues 75-76 (AT), Asn-155, Gln-183, and 203-205 (SGH). Lys-206 is subject to N6-(pyridoxal phosphate)lysine. Residue Thr-243 participates in pyridoxal 5'-phosphate binding. The active-site Cysteine persulfide intermediate is Cys-328. Cys-328 contacts [2Fe-2S] cluster.

It belongs to the class-V pyridoxal-phosphate-dependent aminotransferase family. NifS/IscS subfamily. In terms of assembly, homodimer. Forms a heterotetramer with IscU, interacts with other sulfur acceptors. The cofactor is pyridoxal 5'-phosphate.

Its subcellular location is the cytoplasm. The catalysed reaction is (sulfur carrier)-H + L-cysteine = (sulfur carrier)-SH + L-alanine. It participates in cofactor biosynthesis; iron-sulfur cluster biosynthesis. Its function is as follows. Master enzyme that delivers sulfur to a number of partners involved in Fe-S cluster assembly, tRNA modification or cofactor biosynthesis. Catalyzes the removal of elemental sulfur atoms from cysteine to produce alanine. Functions as a sulfur delivery protein for Fe-S cluster synthesis onto IscU, an Fe-S scaffold assembly protein, as well as other S acceptor proteins. The polypeptide is Cysteine desulfurase IscS (Klebsiella pneumoniae (strain 342)).